The following is a 311-amino-acid chain: MKHFFKSLTLAIALAASVLFWSPQAQAYPFYAQQGYESPREATGRIVCANCHLAAKPIQVEVPQAVTPDSVFEAVVKIPYDTSVQQVLGDGSKGGLNVGAVLMLPEGFKIAPPDRLPEELQAKTSGIYYQPYSDDQQNIILVGPLPGEQYQEIVFPILAPNPGTDKSIHFGKYAVHAGGNRGRGQVYPNGEKSNNNVFTAPIAGTITSITPNPDGSTAVVITPENGEAVTETVPAGPELIVREGQTVVAGAALTNNPNVGGFGQKDTEIVLQDPNRIKWLLVFFAAITLSQILLVLKKKQVEKVQAAEMSF.

The first 27 residues, 1–27 (MKHFFKSLTLAIALAASVLFWSPQAQA), serve as a signal peptide directing secretion. The heme site is built by tyrosine 28, cysteine 48, cysteine 51, and histidine 52. A helical transmembrane segment spans residues 279-296 (WLLVFFAAITLSQILLVL).

This sequence belongs to the cytochrome f family. The 4 large subunits of the cytochrome b6-f complex are cytochrome b6, subunit IV (17 kDa polypeptide, PetD), cytochrome f and the Rieske protein, while the 4 small subunits are PetG, PetL, PetM and PetN. The complex functions as a dimer. It depends on heme as a cofactor.

Its subcellular location is the cellular thylakoid membrane. Functionally, component of the cytochrome b6-f complex, which mediates electron transfer between photosystem II (PSII) and photosystem I (PSI), cyclic electron flow around PSI, and state transitions. This is Cytochrome f from Synechococcus elongatus.